A 78-amino-acid chain; its full sequence is Major outer membrane lipoprotein Lpp 1 (78 aa).

The N-terminal stretch at 1 to 20 (MNRTKLVLGAVILGSTLLAG) is a signal peptide. A lipid anchor (N-palmitoyl cysteine) is attached at C21. C21 is lipidated: S-diacylglycerol cysteine. 2 repeats span residues 24–34 (NAKIDQLSSDV) and 38–48 (NAKVDQLSNDV). A coiled-coil region spans residues 27–75 (IDQLSSDVQTLNAKVDQLSNDVNAMRSDVQAAKDDAARANQRLDNQATK). A disordered region spans residues 56-78 (QAAKDDAARANQRLDNQATKYRK). Polar residues predominate over residues 68-78 (RLDNQATKYRK). An N6-murein peptidoglycan lysine modification is found at K78.

Belongs to the Lpp family. Homotrimer.

The protein resides in the cell outer membrane. The protein localises to the secreted. It localises to the cell wall. Its function is as follows. A highly abundant outer membrane lipoprotein that controls the distance between the inner and outer membranes. The only protein known to be covalently linked to the peptidoglycan network (PGN). Also non-covalently binds the PGN. The link between the cell outer membrane and PGN contributes to maintenance of the structural and functional integrity of the cell envelope, and maintains the correct distance between the PGN and the outer membrane. The polypeptide is Major outer membrane lipoprotein Lpp 1 (Salmonella paratyphi A (strain ATCC 9150 / SARB42)).